The primary structure comprises 887 residues: MSGVNEIRSMFLDYFRKNGHEIVSSSPLVPRNDPTLMFTNAGMVQFKNVFTGLEQRPYSTAATAQKCVRAGGKHNDLDNVGYTARHHTFFEMLGNFSFGDYFKERAIELAWNLITKEYGLDAKRLLVTVYHTDDEAFGLWKKIAGLSDDRIIRIATSDNFWAMGDTGPCGPCSEIFYDHGDHIWGGPPGSAEEDGDRFIEIWNLVFMQYEQITKEERVDLPRPSIDTGMGLERVAAVLQGQHDNYDIDLFRALIAASEEATGVKAEGDRRASHRVIADHLRSSAFLIADGVLPSNEGRGYVLRRIMRRAMRHAQLLGARDPLMWKLLPALVGQMGRAYPELVRAEALISETLKLEETRFRKTLERGLNLLAEASADLSEGDQFNGETAFKLYDTYGFPLDLTQDALRAKGIGVDTDAFTAAMQRQKAEARANWAGSGEAATETIWFELRDKHGATDFLGYDTESAEGVILAIVKDGAVVESAAKGENVQLVLNQTPFYGESGGQVGDTGVITTETGKLTVTDTQKRGEGLFVHYCTVEEGSVKTGEAAALTVDHARRARLRANHSATHLLHEALREVLGTHVAQKGSLVAPERLRFDVSHPKPMTAEELKIVEEMANEIIVQNTPVVTRLMSVDDAIAEGAMALFGEKYGDEVRVVSMGQGLRGSKAGKPYSVELCGGTHVSATGDIGLVRVVSESAVGAGVRRVEALTGEAARAYLGEQDERVKTLAAALKVQPADVLGRVEALLDERRKLERELTEAKKKLALAGDGQNGSGDAARDIGGVRFLGRVVSGVEPKDLKSLADDGKKSLGSGVVAFVGVSGDGKASAVVAVTDDLTSKVSAVDLVRVASAALGGKGGGGRPDMAQAGGPDGGRAAEAIEAVAGALAG.

Residues His564, His568, Cys676, and His680 each coordinate Zn(2+).

It belongs to the class-II aminoacyl-tRNA synthetase family. Zn(2+) is required as a cofactor.

Its subcellular location is the cytoplasm. It carries out the reaction tRNA(Ala) + L-alanine + ATP = L-alanyl-tRNA(Ala) + AMP + diphosphate. Its function is as follows. Catalyzes the attachment of alanine to tRNA(Ala) in a two-step reaction: alanine is first activated by ATP to form Ala-AMP and then transferred to the acceptor end of tRNA(Ala). Also edits incorrectly charged Ser-tRNA(Ala) and Gly-tRNA(Ala) via its editing domain. This chain is Alanine--tRNA ligase, found in Rhizobium meliloti (strain 1021) (Ensifer meliloti).